The chain runs to 281 residues: Transmembrane protein 163 (281 aa).

Residues 1 to 80 are Cytoplasmic-facing; that stretch reads MEPLDTELCY…HEAQNYRKKA (80 aa). Positions 16 to 44 are disordered; sequence IVQPSCNGQTPPGHRTLSPTQQMDHEQQM. A helical membrane pass occupies residues 81–101; that stretch reads LWVSWLSIAITLILAIAAFTV. Residues 102–108 are Extracellular-facing; the sequence is SVMRYSA. Residues 109–129 traverse the membrane as a helical segment; it reads SSFGFALDAVLDVLSSAIVLW. Residues 130–145 are Cytoplasmic-facing; it reads RYSNAAAVHSAHREYM. The chain crosses the membrane as a helical span at residues 146 to 166; it reads ACCILGVIFLLSSICIVSKAI. At 167 to 179 the chain is on the extracellular side; it reads HDLSIRVMPEVDG. A helical transmembrane segment spans residues 180–200; the sequence is FLFSVSILSGILCSLLAAIKF. The Cytoplasmic segment spans residues 201 to 209; it reads MLGKVLTSR. The chain crosses the membrane as a helical span at residues 210-230; the sequence is ALITDGFNSLVGGIMGFSILL. Residues 231 to 240 are Extracellular-facing; it reads SAEVYKHNSK. Residues 241 to 261 traverse the membrane as a helical segment; sequence VWYLDGSVGILIGLIIMSYGI. Topologically, residues 262-281 are cytoplasmic; sequence KLLMDMVPRVRQTRHYEMFE.

Belongs to the TMEM163 family.

The protein resides in the cytoplasmic vesicle. Its subcellular location is the secretory vesicle. It localises to the synaptic vesicle membrane. The protein localises to the early endosome membrane. In terms of biological role, may bind zinc and other divalent cations and recruit them to vesicular organelles. The sequence is that of Transmembrane protein 163 (tmem163) from Xenopus laevis (African clawed frog).